The following is a 430-amino-acid chain: Adenylosuccinate synthetase (430 aa).

Residues G12–K18 and G40–T42 each bind GTP. The active-site Proton acceptor is D13. Positions 13 and 40 each coordinate Mg(2+). IMP is bound by residues D13 to K16, N38 to H41, T130, R144, Q224, T239, and R303. H41 (proton donor) is an active-site residue. Residue T299–R305 coordinates substrate. GTP is bound by residues R305, K331–D333, and S413–S415.

Belongs to the adenylosuccinate synthetase family. As to quaternary structure, homodimer. Requires Mg(2+) as cofactor.

The protein localises to the cytoplasm. It carries out the reaction IMP + L-aspartate + GTP = N(6)-(1,2-dicarboxyethyl)-AMP + GDP + phosphate + 2 H(+). The protein operates within purine metabolism; AMP biosynthesis via de novo pathway; AMP from IMP: step 1/2. In terms of biological role, plays an important role in the de novo pathway of purine nucleotide biosynthesis. Catalyzes the first committed step in the biosynthesis of AMP from IMP. This is Adenylosuccinate synthetase from Rhodopseudomonas palustris (strain HaA2).